Consider the following 324-residue polypeptide: Protoheme IX farnesyltransferase (324 aa).

9 consecutive transmembrane segments (helical) span residues L31 to V51, F56 to I76, V105 to L125, S126 to K146, I153 to G173, V181 to I201, P214 to L234, L238 to L258, and F285 to T305.

The protein belongs to the UbiA prenyltransferase family. Protoheme IX farnesyltransferase subfamily.

It is found in the cell inner membrane. It catalyses the reaction heme b + (2E,6E)-farnesyl diphosphate + H2O = Fe(II)-heme o + diphosphate. Its pathway is porphyrin-containing compound metabolism; heme O biosynthesis; heme O from protoheme: step 1/1. Its function is as follows. Converts heme B (protoheme IX) to heme O by substitution of the vinyl group on carbon 2 of heme B porphyrin ring with a hydroxyethyl farnesyl side group. The sequence is that of Protoheme IX farnesyltransferase from Acaryochloris marina (strain MBIC 11017).